A 162-amino-acid polypeptide reads, in one-letter code: Caveolin-2 (162 aa).

At 1-86 (MGLETEKADV…FEISKYVMYK (86 aa)) the chain is on the cytoplasmic side. Tyrosine 19 is subject to Phosphotyrosine; by SRC. 2 positions are modified to phosphoserine: serine 20 and serine 23. Residue tyrosine 27 is modified to Phosphotyrosine; by SRC. At serine 36 the chain carries Phosphoserine. The segment at residues 87-107 (FLTVFLAIPLAFIAGILFATL) is an intramembrane region (helical). Residues 108–162 (SCLHIWILMPFVKTCLMVLPSVQTIWKSVTDVIIAPLCTSVGRSFSSVSLQLSQD) are Cytoplasmic-facing.

The protein belongs to the caveolin family. In terms of assembly, monomer or homodimer. Interacts with CAV1; the interaction forms a stable heterooligomeric complex that is required for targeting to lipid rafts and for caveolae formation. Tyrosine phosphorylated forms do not form heterooligomers with the Tyr-19-phosphorylated form existing as a monomer or dimer, and the Tyr-27-form as a monomer only. Interacts (tyrosine phosphorylated form) with the SH2 domain-containing proteins, RASA1, NCK1 and SRC. Interacts (tyrosine phosphorylated form) with INSR, the interaction (Tyr-27-phosphorylated form) is increased on insulin stimulation. Interacts (Tyr-19 phosphorylated form) with MAPK1 (phosphorylated form); the interaction, promoted by insulin, leads to nuclear location and MAPK1 activation. Interacts with STAT3; the interaction is increased on insulin-induced tyrosine phosphorylation leading to STAT activation. Phosphorylated on serine and tyrosine residues. CAV1 promotes phosphorylation on Ser-23 which then targets the complex to the plasma membrane, lipid rafts and caveolae. Phosphorylation on Ser-36 appears to modulate mitosis in endothelial cells. Phosphorylation on both Tyr-19 and Tyr-27 is required for insulin-induced 'Ser-727' phosphorylation of STAT3 and its activation. Phosphorylation on Tyr-19 is required for insulin-induced phosphorylation of MAPK1 and DNA binding of STAT3. Tyrosine phosphorylation is induced by both EGF and insulin (By. similarity).

It is found in the nucleus. It localises to the cytoplasm. Its subcellular location is the golgi apparatus membrane. The protein resides in the cell membrane. The protein localises to the membrane. It is found in the caveola. Functionally, may act as a scaffolding protein within caveolar membranes. Interacts directly with G-protein alpha subunits and can functionally regulate their activity. Acts as an accessory protein in conjunction with CAV1 in targeting to lipid rafts and driving caveolae formation. The Ser-36 phosphorylated form has a role in modulating mitosis in endothelial cells. Positive regulator of cellular mitogenesis of the MAPK signaling pathway. Required for the insulin-stimulated nuclear translocation and activation of MAPK1 and STAT3, and the subsequent regulation of cell cycle progression. The protein is Caveolin-2 (CAV2) of Pongo abelii (Sumatran orangutan).